The chain runs to 185 residues: Large ribosomal subunit protein uL5 (185 aa).

It belongs to the universal ribosomal protein uL5 family. As to quaternary structure, part of the 50S ribosomal subunit; part of the 5S rRNA/L5/L18/L25 subcomplex. Contacts the 5S rRNA and the P site tRNA. Forms a bridge to the 30S subunit in the 70S ribosome.

Functionally, this is one of the proteins that bind and probably mediate the attachment of the 5S RNA into the large ribosomal subunit, where it forms part of the central protuberance. In the 70S ribosome it contacts protein S13 of the 30S subunit (bridge B1b), connecting the 2 subunits; this bridge is implicated in subunit movement. Contacts the P site tRNA; the 5S rRNA and some of its associated proteins might help stabilize positioning of ribosome-bound tRNAs. The chain is Large ribosomal subunit protein uL5 from Chelativorans sp. (strain BNC1).